We begin with the raw amino-acid sequence, 375 residues long: 23S rRNA (uracil(747)-C(5))-methyltransferase RlmC (375 aa).

Residues Cys-3, Cys-11, Cys-14, and Cys-87 each coordinate [4Fe-4S] cluster. S-adenosyl-L-methionine is bound by residues Gln-212, Phe-241, Glu-262, and Asn-307. Cys-334 serves as the catalytic Nucleophile.

The protein belongs to the class I-like SAM-binding methyltransferase superfamily. RNA M5U methyltransferase family. RlmC subfamily.

The enzyme catalyses uridine(747) in 23S rRNA + S-adenosyl-L-methionine = 5-methyluridine(747) in 23S rRNA + S-adenosyl-L-homocysteine + H(+). Its function is as follows. Catalyzes the formation of 5-methyl-uridine at position 747 (m5U747) in 23S rRNA. This is 23S rRNA (uracil(747)-C(5))-methyltransferase RlmC from Salmonella agona (strain SL483).